The sequence spans 105 residues: Co-chaperonin GroES (105 aa).

It belongs to the GroES chaperonin family. In terms of assembly, heptamer of 7 subunits arranged in a ring. Interacts with the chaperonin GroEL.

It localises to the cytoplasm. Together with the chaperonin GroEL, plays an essential role in assisting protein folding. The GroEL-GroES system forms a nano-cage that allows encapsulation of the non-native substrate proteins and provides a physical environment optimized to promote and accelerate protein folding. GroES binds to the apical surface of the GroEL ring, thereby capping the opening of the GroEL channel. The sequence is that of Co-chaperonin GroES from Methylovorus sp. (strain SS1 / DSM 11726).